The following is a 293-amino-acid chain: 4-hydroxybenzoate octaprenyltransferase (293 aa).

Transmembrane regions (helical) follow at residues 26-48 (PIGTLLLLYPTLWALFAAAGGMP), 98-118 (TEAKILFVLLLCIAFVLDLLL), 122-142 (TFLLSFVAVALAIIYPFMKRF), 145-165 (LPQVVLGMAFGWAIPMAYGAV), 167-187 (ESLPLECWLLFFANIFWTVAY), 218-238 (IIALLQFITLVLLVIFGWISQ), 241-261 (WGYFVVLGLSASLFSHQCWLT), and 272-292 (AFLNNHYFGLGVFFAILVGIY).

This sequence belongs to the UbiA prenyltransferase family. Mg(2+) serves as cofactor.

It is found in the cell inner membrane. The catalysed reaction is all-trans-octaprenyl diphosphate + 4-hydroxybenzoate = 4-hydroxy-3-(all-trans-octaprenyl)benzoate + diphosphate. Its pathway is cofactor biosynthesis; ubiquinone biosynthesis. In terms of biological role, catalyzes the prenylation of para-hydroxybenzoate (PHB) with an all-trans polyprenyl group. Mediates the second step in the final reaction sequence of ubiquinone-8 (UQ-8) biosynthesis, which is the condensation of the polyisoprenoid side chain with PHB, generating the first membrane-bound Q intermediate 3-octaprenyl-4-hydroxybenzoate. This chain is 4-hydroxybenzoate octaprenyltransferase, found in Actinobacillus pleuropneumoniae serotype 3 (strain JL03).